The sequence spans 199 residues: ATP-dependent Clp protease proteolytic subunit 3 (199 aa).

Ser101 acts as the Nucleophile in catalysis. His126 is an active-site residue.

Belongs to the peptidase S14 family. As to quaternary structure, fourteen ClpP subunits assemble into 2 heptameric rings which stack back to back to give a disk-like structure with a central cavity, resembling the structure of eukaryotic proteasomes.

The protein resides in the cytoplasm. It catalyses the reaction Hydrolysis of proteins to small peptides in the presence of ATP and magnesium. alpha-casein is the usual test substrate. In the absence of ATP, only oligopeptides shorter than five residues are hydrolyzed (such as succinyl-Leu-Tyr-|-NHMec, and Leu-Tyr-Leu-|-Tyr-Trp, in which cleavage of the -Tyr-|-Leu- and -Tyr-|-Trp bonds also occurs).. Functionally, cleaves peptides in various proteins in a process that requires ATP hydrolysis. Has a chymotrypsin-like activity. Plays a major role in the degradation of misfolded proteins. This is ATP-dependent Clp protease proteolytic subunit 3 from Synechococcus elongatus (strain ATCC 33912 / PCC 7942 / FACHB-805) (Anacystis nidulans R2).